Here is a 301-residue protein sequence, read N- to C-terminus: Large ribosomal subunit protein uL18 (301 aa).

This sequence belongs to the universal ribosomal protein uL18 family. In terms of assembly, component of the large ribosomal subunit (LSU). Mature N.crassa ribosomes consist of a small (40S) and a large (60S) subunit. The 40S small subunit contains 1 molecule of ribosomal RNA (18S rRNA) and at least 32 different proteins. The large 60S subunit contains 3 rRNA molecules (26S, 5.8S and 5S rRNA) and at least 42 different proteins.

It localises to the cytoplasm. In terms of biological role, component of the ribosome, a large ribonucleoprotein complex responsible for the synthesis of proteins in the cell. The small ribosomal subunit (SSU) binds messenger RNAs (mRNAs) and translates the encoded message by selecting cognate aminoacyl-transfer RNA (tRNA) molecules. The large subunit (LSU) contains the ribosomal catalytic site termed the peptidyl transferase center (PTC), which catalyzes the formation of peptide bonds, thereby polymerizing the amino acids delivered by tRNAs into a polypeptide chain. The nascent polypeptides leave the ribosome through a tunnel in the LSU and interact with protein factors that function in enzymatic processing, targeting, and the membrane insertion of nascent chains at the exit of the ribosomal tunnel. This chain is Large ribosomal subunit protein uL18 (rpl-5), found in Neurospora crassa (strain ATCC 24698 / 74-OR23-1A / CBS 708.71 / DSM 1257 / FGSC 987).